The chain runs to 136 residues: Transmembrane protein 203 (136 aa).

4 consecutive transmembrane segments (helical) span residues 14–34 (FAQL…VLLA), 50–72 (FIPF…VRLF), 81–101 (VLRL…EMLL), and 112–132 (LWYG…MIRA).

It is found in the endoplasmic reticulum membrane. It localises to the endoplasmic reticulum-Golgi intermediate compartment. Functionally, involved in the regulation of cellular calcium homeotasis. May act as a regulator of STING-mediated inflammatory signaling in macrophages. This Xenopus laevis (African clawed frog) protein is Transmembrane protein 203 (tmem203).